The sequence spans 222 residues: Peptide methionine sulfoxide reductase MsrA 2 (222 aa).

Cys56 is an active-site residue.

The protein belongs to the MsrA Met sulfoxide reductase family.

The catalysed reaction is L-methionyl-[protein] + [thioredoxin]-disulfide + H2O = L-methionyl-(S)-S-oxide-[protein] + [thioredoxin]-dithiol. The enzyme catalyses [thioredoxin]-disulfide + L-methionine + H2O = L-methionine (S)-S-oxide + [thioredoxin]-dithiol. Functionally, has an important function as a repair enzyme for proteins that have been inactivated by oxidation. Catalyzes the reversible oxidation-reduction of methionine sulfoxide in proteins to methionine. The polypeptide is Peptide methionine sulfoxide reductase MsrA 2 (msrA2) (Nostoc sp. (strain PCC 7120 / SAG 25.82 / UTEX 2576)).